Here is a 418-residue protein sequence, read N- to C-terminus: MTIIALGINHKTAPVELREKVAFSPEQISEALQQLSGHAHFNEAVIVSTCNRTEVYCSLAQQNSQTLLQWLSSFHGLDEHELSKNIYCHEGSDAINHLMRVACGLDSLVLGEPQILGQIKQAYNSAKTHNAVGVTFDRLFQKTFSVAKQVRTETNIGASAVSVAYAAVNLAKHIYGKLDKTNVLLIGAGETIELVAKHLYQNEPQNITVANRTLERARSLADQVSGDVIALAQLPERLHKADIVISSTASTLPIIGKGVVEQALKQRRYKPMLFIDIAVPRDIESQVGELDDAYLYSVDDLQTIVSENMSAREEAAEQAEVIITERTKEFLMWIRSLDSVDLIRHYRNDVQTIKSELVERAVSQLNTGKDAEKVILELANKLTNRLMHAPTRAIQDAAKKGEVAQLNQLKKMLGIDQE.

Substrate-binding positions include 49 to 52, Ser107, 112 to 114, and Gln118; these read TCNR and EPQ. The active-site Nucleophile is the Cys50. NADP(+) is bound at residue 187-192; that stretch reads GAGETI.

Belongs to the glutamyl-tRNA reductase family. As to quaternary structure, homodimer.

The catalysed reaction is (S)-4-amino-5-oxopentanoate + tRNA(Glu) + NADP(+) = L-glutamyl-tRNA(Glu) + NADPH + H(+). It functions in the pathway porphyrin-containing compound metabolism; protoporphyrin-IX biosynthesis; 5-aminolevulinate from L-glutamyl-tRNA(Glu): step 1/2. Functionally, catalyzes the NADPH-dependent reduction of glutamyl-tRNA(Glu) to glutamate 1-semialdehyde (GSA). This is Glutamyl-tRNA reductase from Pseudoalteromonas translucida (strain TAC 125).